Reading from the N-terminus, the 427-residue chain is Adenylosuccinate synthetase (427 aa).

GTP is bound by residues 12–18 (GDEGKGK) and 40–42 (GHT). The Proton acceptor role is filled by Asp-13. Residues Asp-13 and Gly-40 each contribute to the Mg(2+) site. Residues 13–16 (DEGK), 38–41 (NAGH), Thr-126, Arg-140, Gln-221, Thr-236, and Arg-299 contribute to the IMP site. The active-site Proton donor is His-41. 295–301 (STTNRPR) is a substrate binding site. GTP contacts are provided by residues Arg-301, 327–329 (KLD), and 409–411 (SLG).

This sequence belongs to the adenylosuccinate synthetase family. In terms of assembly, homodimer. Requires Mg(2+) as cofactor.

The protein localises to the cytoplasm. It catalyses the reaction IMP + L-aspartate + GTP = N(6)-(1,2-dicarboxyethyl)-AMP + GDP + phosphate + 2 H(+). Its pathway is purine metabolism; AMP biosynthesis via de novo pathway; AMP from IMP: step 1/2. Functionally, plays an important role in the de novo pathway of purine nucleotide biosynthesis. Catalyzes the first committed step in the biosynthesis of AMP from IMP. The protein is Adenylosuccinate synthetase of Borrelia turicatae (strain 91E135).